Here is a 691-residue protein sequence, read N- to C-terminus: Threonine--tRNA ligase (691 aa).

In terms of domain architecture, TGS spans 1–69 (MSTPEITPAA…QQDVEVAAVP (69 aa)). Residues 268-574 (DHRRLGQELD…LLEHYAGAFP (307 aa)) are catalytic. Residues cysteine 373, histidine 424, and histidine 551 each coordinate Zn(2+).

The protein belongs to the class-II aminoacyl-tRNA synthetase family. Homodimer. The cofactor is Zn(2+).

Its subcellular location is the cytoplasm. It carries out the reaction tRNA(Thr) + L-threonine + ATP = L-threonyl-tRNA(Thr) + AMP + diphosphate + H(+). Functionally, catalyzes the attachment of threonine to tRNA(Thr) in a two-step reaction: L-threonine is first activated by ATP to form Thr-AMP and then transferred to the acceptor end of tRNA(Thr). Also edits incorrectly charged L-seryl-tRNA(Thr). The chain is Threonine--tRNA ligase from Corynebacterium jeikeium (strain K411).